Consider the following 717-residue polypeptide: Methionine--tRNA ligase (717 aa).

The 'HIGH' region motif lies at 19–29; it reads PYANGDLHVGH. Zn(2+) contacts are provided by Cys150, Cys153, Cys162, and Cys166. A 'KMSKS' region motif is present at residues 356–360; sequence ALSTS. Thr359 contributes to the ATP binding site. Positions 573–603 are disordered; that stretch reads ERVEEASEASAEASNEGGEAAGDEVDDGDVD. Over residues 580–590 the composition is skewed to low complexity; that stretch reads EASAEASNEGG. A compositionally biased stretch (acidic residues) spans 593-603; that stretch reads AGDEVDDGDVD. The tRNA-binding domain maps to 619–717; the sequence is DFEGVDMRVG…EDAPLGTRIK (99 aa).

It belongs to the class-I aminoacyl-tRNA synthetase family. MetG type 1 subfamily. Homodimer. It depends on Zn(2+) as a cofactor.

It localises to the cytoplasm. It catalyses the reaction tRNA(Met) + L-methionine + ATP = L-methionyl-tRNA(Met) + AMP + diphosphate. Is required not only for elongation of protein synthesis but also for the initiation of all mRNA translation through initiator tRNA(fMet) aminoacylation. In Haloarcula marismortui (strain ATCC 43049 / DSM 3752 / JCM 8966 / VKM B-1809) (Halobacterium marismortui), this protein is Methionine--tRNA ligase.